The sequence spans 198 residues: Imidazoleglycerol-phosphate dehydratase (198 aa).

Belongs to the imidazoleglycerol-phosphate dehydratase family.

The protein localises to the cytoplasm. It catalyses the reaction D-erythro-1-(imidazol-4-yl)glycerol 3-phosphate = 3-(imidazol-4-yl)-2-oxopropyl phosphate + H2O. It functions in the pathway amino-acid biosynthesis; L-histidine biosynthesis; L-histidine from 5-phospho-alpha-D-ribose 1-diphosphate: step 6/9. The sequence is that of Imidazoleglycerol-phosphate dehydratase from Herminiimonas arsenicoxydans.